A 138-amino-acid polypeptide reads, in one-letter code: Basic phospholipase A2 Bs-N6 (138 aa).

The signal sequence occupies residues 1 to 16; it reads MRTLWIVAVLLVGVEG. Cystine bridges form between cysteine 42/cysteine 131, cysteine 44/cysteine 60, cysteine 59/cysteine 111, cysteine 65/cysteine 138, cysteine 66/cysteine 104, cysteine 73/cysteine 97, and cysteine 91/cysteine 102. Ca(2+) contacts are provided by tyrosine 43, glycine 45, and glycine 47. Residue histidine 63 is part of the active site. Residue aspartate 64 participates in Ca(2+) binding. Aspartate 105 is an active-site residue.

As to quaternary structure, monomer. It depends on Ca(2+) as a cofactor. Contains 7 disulfide bonds. In terms of tissue distribution, expressed by the venom gland.

The protein localises to the secreted. It catalyses the reaction a 1,2-diacyl-sn-glycero-3-phosphocholine + H2O = a 1-acyl-sn-glycero-3-phosphocholine + a fatty acid + H(+). Snake venom phospholipase A2 (PLA2) that shows myotoxic activities. PLA2 catalyzes the calcium-dependent hydrolysis of the 2-acyl groups in 3-sn-phosphoglycerides. This chain is Basic phospholipase A2 Bs-N6, found in Bothriechis schlegelii (Eyelash palm pitviper).